The primary structure comprises 249 residues: tRNA (guanine-N(1)-)-methyltransferase (249 aa).

Residues glycine 113 and 133–138 (IGDFVV) contribute to the S-adenosyl-L-methionine site.

This sequence belongs to the RNA methyltransferase TrmD family. In terms of assembly, homodimer.

Its subcellular location is the cytoplasm. The catalysed reaction is guanosine(37) in tRNA + S-adenosyl-L-methionine = N(1)-methylguanosine(37) in tRNA + S-adenosyl-L-homocysteine + H(+). Specifically methylates guanosine-37 in various tRNAs. The protein is tRNA (guanine-N(1)-)-methyltransferase of Neisseria gonorrhoeae (strain ATCC 700825 / FA 1090).